The chain runs to 152 residues: Ribosome maturation factor RimP (152 aa).

It belongs to the RimP family.

The protein localises to the cytoplasm. Functionally, required for maturation of 30S ribosomal subunits. The sequence is that of Ribosome maturation factor RimP from Ectopseudomonas mendocina (strain ymp) (Pseudomonas mendocina).